We begin with the raw amino-acid sequence, 559 residues long: Inositol-3-phosphate synthase 1 (559 aa).

Glycine 67, glycine 68, asparagine 69, asparagine 70, aspartate 141, serine 177, valine 178, glutamine 188, arginine 191, threonine 228, alanine 229, asparagine 230, threonine 231, glycine 278, serine 279, aspartate 303, serine 306, asparagine 337, asparagine 338, aspartate 339, and lysine 352 together coordinate NAD(+). Serine 279 carries the post-translational modification Phosphoserine. Serine 357 bears the Phosphoserine mark. Glycine 390, aspartate 391, aspartate 419, and serine 420 together coordinate NAD(+).

Belongs to the myo-inositol 1-phosphate synthase family. Requires NAD(+) as cofactor.

The protein resides in the cytoplasm. The catalysed reaction is D-glucose 6-phosphate = 1D-myo-inositol 3-phosphate. It participates in polyol metabolism; myo-inositol biosynthesis; myo-inositol from D-glucose 6-phosphate: step 1/2. Its function is as follows. Key enzyme in myo-inositol biosynthesis pathway that catalyzes the conversion of glucose 6-phosphate to 1-myo-inositol 1-phosphate in a NAD-dependent manner. Rate-limiting enzyme in the synthesis of all inositol-containing compounds. The polypeptide is Inositol-3-phosphate synthase 1 (ISYNA1) (Macaca fascicularis (Crab-eating macaque)).